A 244-amino-acid polypeptide reads, in one-letter code: Protein-lysine methyltransferase METTL21E (244 aa).

The tract at residues methionine 1–aspartate 20 is disordered. Residues threonine 9–arginine 18 are compositionally biased toward basic and acidic residues. S-adenosyl-L-methionine is bound by residues tryptophan 69, glycine 97–glycine 99, aspartate 118, tryptophan 149, and alanine 170.

Belongs to the methyltransferase superfamily. METTL21 family.

In terms of biological role, protein-lysine methyltransferase. This is Protein-lysine methyltransferase METTL21E (Mettl21e) from Mus musculus (Mouse).